A 549-amino-acid chain; its full sequence is Cation/acetate symporter ActP (549 aa).

13 consecutive transmembrane segments (helical) span residues 33–53 (WQAI…TYWA), 77–97 (LAIA…ALVF), 103–123 (GLIY…LIAE), 148–168 (ILSA…QMVG), 183–203 (IAVV…GMLA), 206–226 (WVQI…AFMV), 262–282 (ISAL…PHIL), 303–323 (GFMG…IMLV), 355–375 (LFLG…VAGL), 404–424 (VSKI…VLFE), 428–448 (IAFM…PIIL), 464–484 (GGWL…TIWV), and 493–513 (IFPY…GIWF).

The protein belongs to the sodium:solute symporter (SSF) (TC 2.A.21) family.

The protein resides in the cell inner membrane. Its function is as follows. Transports acetate. The chain is Cation/acetate symporter ActP from Salmonella arizonae (strain ATCC BAA-731 / CDC346-86 / RSK2980).